We begin with the raw amino-acid sequence, 546 residues long: Chaperonin GroEL (546 aa).

ATP contacts are provided by residues 30–33 (TLGP), Lys51, 87–91 (DGTTT), Gly415, 479–481 (NAA), and Asp495. The disordered stretch occupies residues 527-546 (DESAAPAMPGGMGGMGDMGM). Positions 536 to 546 (GGMGGMGDMGM) are enriched in gly residues.

Belongs to the chaperonin (HSP60) family. Forms a cylinder of 14 subunits composed of two heptameric rings stacked back-to-back. Interacts with the co-chaperonin GroES.

The protein resides in the cytoplasm. The enzyme catalyses ATP + H2O + a folded polypeptide = ADP + phosphate + an unfolded polypeptide.. Together with its co-chaperonin GroES, plays an essential role in assisting protein folding. The GroEL-GroES system forms a nano-cage that allows encapsulation of the non-native substrate proteins and provides a physical environment optimized to promote and accelerate protein folding. The chain is Chaperonin GroEL from Acidovorax ebreus (strain TPSY) (Diaphorobacter sp. (strain TPSY)).